We begin with the raw amino-acid sequence, 224 residues long: Urease accessory protein UreF 2 (224 aa).

The protein belongs to the UreF family. In terms of assembly, ureD, UreF and UreG form a complex that acts as a GTP-hydrolysis-dependent molecular chaperone, activating the urease apoprotein by helping to assemble the nickel containing metallocenter of UreC. The UreE protein probably delivers the nickel.

The protein resides in the cytoplasm. Required for maturation of urease via the functional incorporation of the urease nickel metallocenter. This chain is Urease accessory protein UreF 2, found in Pseudomonas syringae pv. tomato (strain ATCC BAA-871 / DC3000).